We begin with the raw amino-acid sequence, 878 residues long: Alanine--tRNA ligase (878 aa).

The Zn(2+) site is built by His-567, His-571, Cys-669, and His-673.

It belongs to the class-II aminoacyl-tRNA synthetase family. The cofactor is Zn(2+).

The protein localises to the cytoplasm. It catalyses the reaction tRNA(Ala) + L-alanine + ATP = L-alanyl-tRNA(Ala) + AMP + diphosphate. In terms of biological role, catalyzes the attachment of alanine to tRNA(Ala) in a two-step reaction: alanine is first activated by ATP to form Ala-AMP and then transferred to the acceptor end of tRNA(Ala). Also edits incorrectly charged Ser-tRNA(Ala) and Gly-tRNA(Ala) via its editing domain. The chain is Alanine--tRNA ligase from Rickettsia massiliae (strain Mtu5).